A 69-amino-acid chain; its full sequence is Large ribosomal subunit protein uL29 (69 aa).

This sequence belongs to the universal ribosomal protein uL29 family.

The protein is Large ribosomal subunit protein uL29 of Mycoplasmopsis agalactiae (strain NCTC 10123 / CIP 59.7 / PG2) (Mycoplasma agalactiae).